The sequence spans 362 residues: Molybdopterin synthase catalytic subunit (362 aa).

Substrate contacts are provided by residues 101–102 (HR), lysine 117, and 124–126 (KKE).

It belongs to the MoaE family. MOCS2B subfamily. In terms of assembly, heterotetramer; composed of 2 small (Mocs2A) and 2 large (Mocs2B) subunits.

Its subcellular location is the cytoplasm. The enzyme catalyses 2 [molybdopterin-synthase sulfur-carrier protein]-C-terminal-Gly-aminoethanethioate + cyclic pyranopterin phosphate + H2O = molybdopterin + 2 [molybdopterin-synthase sulfur-carrier protein]-C-terminal Gly-Gly + 2 H(+). The protein operates within cofactor biosynthesis; molybdopterin biosynthesis. Its function is as follows. Catalytic subunit of the molybdopterin synthase complex, a complex that catalyzes the conversion of precursor Z into molybdopterin. Acts by mediating the incorporation of 2 sulfur atoms from thiocarboxylated Mocs2A into precursor Z to generate a dithiolene group. This chain is Molybdopterin synthase catalytic subunit, found in Drosophila grimshawi (Hawaiian fruit fly).